An 84-amino-acid polypeptide reads, in one-letter code: Cytochrome b559 subunit alpha (84 aa).

The chain crosses the membrane as a helical span at residues 22–36; sequence IIHSITIPSLFVSGW. His24 contributes to the heme binding site.

Belongs to the PsbE/PsbF family. In terms of assembly, heterodimer of an alpha subunit and a beta subunit. PSII is composed of 1 copy each of membrane proteins PsbA, PsbB, PsbC, PsbD, PsbE, PsbF, PsbH, PsbI, PsbJ, PsbK, PsbL, PsbM, PsbT, PsbX, PsbY, PsbZ, Psb30/Ycf12, at least 3 peripheral proteins of the oxygen-evolving complex and a large number of cofactors. It forms dimeric complexes. It depends on heme b as a cofactor.

The protein resides in the plastid. It localises to the chloroplast thylakoid membrane. This b-type cytochrome is tightly associated with the reaction center of photosystem II (PSII). PSII is a light-driven water:plastoquinone oxidoreductase that uses light energy to abstract electrons from H(2)O, generating O(2) and a proton gradient subsequently used for ATP formation. It consists of a core antenna complex that captures photons, and an electron transfer chain that converts photonic excitation into a charge separation. The polypeptide is Cytochrome b559 subunit alpha (Phaeodactylum tricornutum (strain CCAP 1055/1)).